The sequence spans 144 residues: Ig heavy chain V region M167 (144 aa).

The signal sequence occupies residues 1-19 (MKMWLNWVFLLTLLHGIQC). Positions 20–133 (EVKVVESGGG…GNSYFGYFDV (114 aa)) constitute an Ig-like domain.

This is Ig heavy chain V region M167 from Mus musculus (Mouse).